Reading from the N-terminus, the 215-residue chain is Transcription factor LAX PANICLE 1 (215 aa).

Residues 1-48 (MHDPRGFPIHPQPYHLHPTAGGLGEGRMRGGGRRRPGAKLSTDPQSVA) form a disordered region. A basic motif; degenerate region spans residues 40–53 (LSTDPQSVAARERR). In terms of domain architecture, bHLH spans 40–89 (LSTDPQSVAARERRHRISDRFRVLRSLVPGGSKMDTVSMLEQAIHYVKFL). A helix-loop-helix motif region spans residues 54–89 (HRISDRFRVLRSLVPGGSKMDTVSMLEQAIHYVKFL).

This sequence belongs to the bHLH protein family. In terms of assembly, efficient DNA binding requires dimerization with another bHLH protein. Interacts with LAX2. As to expression, expressed in the boundary between the shoot apical meristem (SAM) and the region of new meristem formation.

It localises to the nucleus. Its function is as follows. Transcription factor that seems to regulate organogenesis in postembryonic development. Involved in the regulation of shoot branching by controlling axillary meristem initiation. Functions in association with LAX2 to regulate the process of AM formation. Possesses transactivation activity in yeast. The protein is Transcription factor LAX PANICLE 1 of Oryza sativa subsp. japonica (Rice).